The sequence spans 317 residues: MKKFALLFIALVTAVVISACGNQSTSSKGSDTKKEQITVKHQLDKNGTKVPKNPKKVVVFDFGSLDTLDKLGLDDIVAGLPKQVLPKYLSKFKDDKYADVGSLKEPDFDKVAELDPDLIIISARQSESYKEFSKIAPTIYLGVDTAKYMESFKSDAETIGKIFDKEDKVKDELANIDHSIADVKKTAEKLNKNGLVIMANDGKISAFGPKSRYGLIHDVFGVAPADQNIKASTHGQSVSYEYISKTNPDYLFVIDRGTAIGETSSTKQVVENDYVKNVNAVKNGHVIYLDSATWYLSGGGLESMTQMIKEVKDGLEK.

Positions 1–19 are cleaved as a signal peptide; it reads MKKFALLFIALVTAVVISA. C20 is lipidated: N-palmitoyl cysteine. Residue C20 is the site of S-diacylglycerol cysteine attachment. Positions 56-317 constitute a Fe/B12 periplasmic-binding domain; the sequence is KVVVFDFGSL…IKEVKDGLEK (262 aa).

It belongs to the bacterial solute-binding protein 8 family. As to quaternary structure, the complex is composed of two ATP-binding proteins (YclP), two transmembrane proteins (YclN and YclO) and a solute-binding protein (YclQ). Interacts with FloT.

It is found in the cell membrane. It localises to the membrane raft. Part of the ABC transporter complex YclNOPQ involved in uptake of ferric-petrobactin. Petrobactin is a photoreactive 3,4-catecholate siderophore produced by many members of the B.cereus group, including B.anthracis. Binds selectively iron-free and ferric petrobactin and the petrobactin precursor 3,4-dihydroxybenzoic acid (3,4-DHB). This Bacillus subtilis (strain 168) protein is Petrobactin-binding protein YclQ (yclQ).